Consider the following 736-residue polypeptide: Segment polarity protein dishevelled homolog DVL-2 (736 aa).

One can recognise a DIX domain in the interval 11 to 93 (VGETKVIYHL…RVVSWLVSSD (83 aa)). The interval 93 to 255 (DTPQPEVAPP…RMERTSSFSS (163 aa)) is disordered. Positions 111 to 122 (VPPPPPLPPLPP) are enriched in pro residues. Residues 159 to 171 (LRRDRPRRRDSSE) are compositionally biased toward basic and acidic residues. A compositionally biased stretch (low complexity) spans 193–208 (ESSSTLMTSELESTSL). Position 211 is a phosphoserine (S211). Over residues 218–230 (SRFSSSTEQSSAS) the composition is skewed to polar residues. Residues 232–244 (LLKRHRRRRKQRP) are compositionally biased toward basic residues. A PDZ domain is found at 267–339 (TVTLNMEKYN…NDDAVRVLRD (73 aa)). A DEP domain is found at 433–507 (PESGLEVRDR…SEQCYYVFGD (75 aa)). Residues 558–568 (PHPYSPQPPPY) show a composition bias toward pro residues. Positions 558–665 (PHPYSPQPPP…PNLRALPGLH (108 aa)) are disordered. Composition is skewed to low complexity over residues 581–598 (ASSQ…TRSD) and 614–629 (SKSG…SRGG).

This sequence belongs to the DSH family. As to quaternary structure, interacts through its PDZ domain with the C-terminal regions of VANGL1 and VANGL2. Interacts with Rac. Interacts with ARRB1; the interaction is enhanced by phosphorylation of DVL1. Can form large oligomers (via DIX domain). Interacts (via DIX domain) with DIXDC1 (via DIX domain). Interacts (via DEP domain) with AP2M1 and the AP-2 complex. Interacts with FAM105B/otulin. Interacts with DCDC2. Interacts (when phosphorylated) with FOXK1 and FOXK2; the interaction induces DVL2 nuclear translocation. Interacts with MAPK15. Interacts with PKD1 (via extracellular domain). Interacts with LMBR1L. Post-translationally, phosphorylated by CSNK1D. WNT3A induces DVL2 phosphorylation by CSNK1E and MARK kinases. Ubiquitinated via 'Lys-63'-linked polyubiquitin chains; leading to its autophagy-mediated degradation. Ubiquitous.

The protein resides in the cell membrane. Its subcellular location is the cytoplasm. It localises to the cytosol. It is found in the cytoplasmic vesicle. The protein localises to the nucleus. Plays a role in the signal transduction pathways mediated by multiple Wnt genes. Participates both in canonical and non-canonical Wnt signaling by binding to the cytoplasmic C-terminus of frizzled family members and transducing the Wnt signal to down-stream effectors. Promotes internalization and degradation of frizzled proteins upon Wnt signaling. This chain is Segment polarity protein dishevelled homolog DVL-2 (Dvl2), found in Mus musculus (Mouse).